Consider the following 215-residue polypeptide: Beta-crystallin A3 (215 aa).

The segment at 1–30 (MGEAAVPPELDTFPAAKMAQTNPLPVPMGP) is N-terminal arm. Beta/gamma crystallin 'Greek key' domains are found at residues 31–70 (WKIT…KVEC) and 71–117 (GAWV…RPVC). The connecting peptide stretch occupies residues 118 to 123 (SANHKE). 2 Beta/gamma crystallin 'Greek key' domains span residues 124–165 (SKIT…KIPC) and 166–214 (GAWV…RRIQ).

It belongs to the beta/gamma-crystallin family. In terms of assembly, homo/heterodimer, or complexes of higher-order. The structure of beta-crystallin oligomers seems to be stabilized through interactions between the N-terminal arms.

Its function is as follows. Crystallins are the dominant structural components of the vertebrate eye lens. The sequence is that of Beta-crystallin A3 (CRYBA1) from Gallus gallus (Chicken).